We begin with the raw amino-acid sequence, 319 residues long: tRNA dimethylallyltransferase (319 aa).

Residue 26–33 participates in ATP binding; the sequence is GPTAAGKS. 28-33 is a substrate binding site; it reads TAAGKS. The tract at residues 51–54 is interaction with substrate tRNA; the sequence is DSMQ.

Belongs to the IPP transferase family. Monomer. Mg(2+) is required as a cofactor.

The enzyme catalyses adenosine(37) in tRNA + dimethylallyl diphosphate = N(6)-dimethylallyladenosine(37) in tRNA + diphosphate. Functionally, catalyzes the transfer of a dimethylallyl group onto the adenine at position 37 in tRNAs that read codons beginning with uridine, leading to the formation of N6-(dimethylallyl)adenosine (i(6)A). The polypeptide is tRNA dimethylallyltransferase (Salinispora tropica (strain ATCC BAA-916 / DSM 44818 / JCM 13857 / NBRC 105044 / CNB-440)).